The sequence spans 454 residues: Bifunctional protein GlmU (454 aa).

Residues 1-226 (MSLNVVILAA…PIETEGANNR (226 aa)) are pyrophosphorylase. Residues 8–11 (LAAG), K22, Q73, 78–79 (GT), 100–102 (YGD), G137, E151, N166, and N224 each bind UDP-N-acetyl-alpha-D-glucosamine. D102 serves as a coordination point for Mg(2+). N224 contributes to the Mg(2+) binding site. The interval 227–247 (VQLAALERAYQARRAEELMLA) is linker. The N-acetyltransferase stretch occupies residues 248–454 (GANLRDPARI…GWQRPVKKPK (207 aa)). Residues R330 and K348 each coordinate UDP-N-acetyl-alpha-D-glucosamine. The active-site Proton acceptor is the H360. Y363 and N374 together coordinate UDP-N-acetyl-alpha-D-glucosamine. Residues A377, 383-384 (NY), S402, A420, and R437 each bind acetyl-CoA.

This sequence in the N-terminal section; belongs to the N-acetylglucosamine-1-phosphate uridyltransferase family. In the C-terminal section; belongs to the transferase hexapeptide repeat family. As to quaternary structure, homotrimer. Mg(2+) is required as a cofactor.

It is found in the cytoplasm. The enzyme catalyses alpha-D-glucosamine 1-phosphate + acetyl-CoA = N-acetyl-alpha-D-glucosamine 1-phosphate + CoA + H(+). The catalysed reaction is N-acetyl-alpha-D-glucosamine 1-phosphate + UTP + H(+) = UDP-N-acetyl-alpha-D-glucosamine + diphosphate. The protein operates within nucleotide-sugar biosynthesis; UDP-N-acetyl-alpha-D-glucosamine biosynthesis; N-acetyl-alpha-D-glucosamine 1-phosphate from alpha-D-glucosamine 6-phosphate (route II): step 2/2. Its pathway is nucleotide-sugar biosynthesis; UDP-N-acetyl-alpha-D-glucosamine biosynthesis; UDP-N-acetyl-alpha-D-glucosamine from N-acetyl-alpha-D-glucosamine 1-phosphate: step 1/1. It functions in the pathway bacterial outer membrane biogenesis; LPS lipid A biosynthesis. In terms of biological role, catalyzes the last two sequential reactions in the de novo biosynthetic pathway for UDP-N-acetylglucosamine (UDP-GlcNAc). The C-terminal domain catalyzes the transfer of acetyl group from acetyl coenzyme A to glucosamine-1-phosphate (GlcN-1-P) to produce N-acetylglucosamine-1-phosphate (GlcNAc-1-P), which is converted into UDP-GlcNAc by the transfer of uridine 5-monophosphate (from uridine 5-triphosphate), a reaction catalyzed by the N-terminal domain. The chain is Bifunctional protein GlmU from Shewanella amazonensis (strain ATCC BAA-1098 / SB2B).